The sequence spans 136 residues: Preprocaerulein type I' (136 aa).

Positions 1–26 (MFKGILLCVLFAVLSANPLSQPEGFA) are cleaved as a signal peptide. Positions 27–136 (DEERDVRGLA…NALGGAPQQR (110 aa)) are excised as a propeptide. The disordered stretch occupies residues 82–101 (GAPQQREANDERRFADDEDD).

It belongs to the gastrin/cholecystokinin family. Expressed by the skin glands.

Its subcellular location is the secreted. Functionally, the pharmacological activities of caerulein are quite similar to the physiological activities of gastrin and related peptides. In Xenopus laevis (African clawed frog), this protein is Preprocaerulein type I'.